The sequence spans 232 residues: Probable ADP-ribosylation factor GTPase-activating protein AGD15 (232 aa).

The Arf-GAP domain occupies 16–130 (SKILEALLKH…RWVSPGAIQP (115 aa)). A C4-type zinc finger spans residues 31–54 (CADCRSKAPRWASVNLGIFICMQC). Residues 203–232 (PNQKNENFSSEVNQNRRTTIAPPSSWATFD) form a disordered region. A compositionally biased stretch (polar residues) spans 206–232 (KNENFSSEVNQNRRTTIAPPSSWATFD).

In terms of biological role, GTPase-activating protein (GAP) for ADP ribosylation factor (ARF). The sequence is that of Probable ADP-ribosylation factor GTPase-activating protein AGD15 (AGD15) from Arabidopsis thaliana (Mouse-ear cress).